The sequence spans 164 residues: V-type proton ATPase 16 kDa proteolipid subunit (164 aa).

Over 1–9 (MSNFAGDET) the chain is Lumenal. Residues 10-32 (APFFGFLGAAAALVFSCMGAAYG) traverse the membrane as a helical segment. The Cytoplasmic portion of the chain corresponds to 33 to 54 (TAKSGVGVASMGVMRPELVMKS). Residues 55–75 (IVPVVMAGVLGIYGLIIAVII) form a helical membrane-spanning segment. The Lumenal segment spans residues 76 to 94 (STGINPKTKSYYLFDGYAH). Residues 95 to 116 (LSSGLACGLAGLSAGMAIGIVG) form a helical membrane-spanning segment. At 117 to 128 (DAGVRANAQQPK) the chain is on the cytoplasmic side. Residues 129–154 (LFVGMILILIFAEALALYGLIVGIIL) form a helical membrane-spanning segment. Residues 155–164 (SSRAGQSRAE) are Lumenal-facing.

This sequence belongs to the V-ATPase proteolipid subunit family. As to quaternary structure, V-ATPase is a heteromultimeric enzyme composed of a peripheral catalytic V1 complex (main components: subunits A, B, C, D, E, and F) attached to an integral membrane V0 proton pore complex (main component: the proteolipid protein; which is present as a hexamer that forms the proton-conducting pore).

Its subcellular location is the vacuole membrane. Functionally, proton-conducting pore forming subunit of the membrane integral V0 complex of vacuolar ATPase. V-ATPase is responsible for acidifying a variety of intracellular compartments in eukaryotic cells. In Solanum lycopersicum (Tomato), this protein is V-type proton ATPase 16 kDa proteolipid subunit.